The chain runs to 215 residues: Thiamine-phosphate synthase (215 aa).

Residues 37–41 (QLRIK) and Asn-69 contribute to the 4-amino-2-methyl-5-(diphosphooxymethyl)pyrimidine site. Residues Asp-70 and Asp-89 each contribute to the Mg(2+) site. Ser-108 contributes to the 4-amino-2-methyl-5-(diphosphooxymethyl)pyrimidine binding site. 2-[(2R,5Z)-2-carboxy-4-methylthiazol-5(2H)-ylidene]ethyl phosphate is bound at residue 134 to 136 (TQT). Lys-137 is a binding site for 4-amino-2-methyl-5-(diphosphooxymethyl)pyrimidine. Residues Gly-166 and 186–187 (VS) contribute to the 2-[(2R,5Z)-2-carboxy-4-methylthiazol-5(2H)-ylidene]ethyl phosphate site.

The protein belongs to the thiamine-phosphate synthase family. It depends on Mg(2+) as a cofactor.

The catalysed reaction is 2-[(2R,5Z)-2-carboxy-4-methylthiazol-5(2H)-ylidene]ethyl phosphate + 4-amino-2-methyl-5-(diphosphooxymethyl)pyrimidine + 2 H(+) = thiamine phosphate + CO2 + diphosphate. It catalyses the reaction 2-(2-carboxy-4-methylthiazol-5-yl)ethyl phosphate + 4-amino-2-methyl-5-(diphosphooxymethyl)pyrimidine + 2 H(+) = thiamine phosphate + CO2 + diphosphate. The enzyme catalyses 4-methyl-5-(2-phosphooxyethyl)-thiazole + 4-amino-2-methyl-5-(diphosphooxymethyl)pyrimidine + H(+) = thiamine phosphate + diphosphate. It participates in cofactor biosynthesis; thiamine diphosphate biosynthesis; thiamine phosphate from 4-amino-2-methyl-5-diphosphomethylpyrimidine and 4-methyl-5-(2-phosphoethyl)-thiazole: step 1/1. Condenses 4-methyl-5-(beta-hydroxyethyl)thiazole monophosphate (THZ-P) and 2-methyl-4-amino-5-hydroxymethyl pyrimidine pyrophosphate (HMP-PP) to form thiamine monophosphate (TMP). This is Thiamine-phosphate synthase from Yersinia pestis (strain Pestoides F).